Reading from the N-terminus, the 354-residue chain is Chorismate synthase (354 aa).

R48 and R54 together coordinate NADP(+). FMN-binding positions include 125–127 (RSS), 238–239 (NA), G278, 293–297 (KPTSS), and R319.

This sequence belongs to the chorismate synthase family. As to quaternary structure, homotetramer. Requires FMNH2 as cofactor.

The enzyme catalyses 5-O-(1-carboxyvinyl)-3-phosphoshikimate = chorismate + phosphate. It participates in metabolic intermediate biosynthesis; chorismate biosynthesis; chorismate from D-erythrose 4-phosphate and phosphoenolpyruvate: step 7/7. In terms of biological role, catalyzes the anti-1,4-elimination of the C-3 phosphate and the C-6 proR hydrogen from 5-enolpyruvylshikimate-3-phosphate (EPSP) to yield chorismate, which is the branch point compound that serves as the starting substrate for the three terminal pathways of aromatic amino acid biosynthesis. This reaction introduces a second double bond into the aromatic ring system. This chain is Chorismate synthase, found in Buchnera aphidicola subsp. Acyrthosiphon pisum (strain 5A).